Here is a 94-residue protein sequence, read N- to C-terminus: HssA/B-like protein 49 (94 aa).

The disordered stretch occupies residues 1–20; that stretch reads MTLFSSISSISNPMTSSKSS.

Belongs to the hssA/B family.

This chain is HssA/B-like protein 49 (hssl49), found in Dictyostelium discoideum (Social amoeba).